A 172-amino-acid polypeptide reads, in one-letter code: 3-phenylpropionate/cinnamic acid dioxygenase subunit beta (172 aa).

Belongs to the bacterial ring-hydroxylating dioxygenase beta subunit family. As to quaternary structure, this dioxygenase system consists of four proteins: the two subunits of the hydroxylase component (HcaE and HcaF), a ferredoxin (HcaC) and a ferredoxin reductase (HcaD).

It catalyses the reaction 3-phenylpropanoate + NADH + O2 + H(+) = 3-(cis-5,6-dihydroxycyclohexa-1,3-dien-1-yl)propanoate + NAD(+). The catalysed reaction is (E)-cinnamate + NADH + O2 + H(+) = (2E)-3-(cis-5,6-dihydroxycyclohexa-1,3-dien-1-yl)prop-2-enoate + NAD(+). The protein operates within aromatic compound metabolism; 3-phenylpropanoate degradation. Its function is as follows. Part of the multicomponent 3-phenylpropionate dioxygenase. Converts 3-phenylpropionic acid (PP) and cinnamic acid (CI) into 3-phenylpropionate-dihydrodiol (PP-dihydrodiol) and cinnamic acid-dihydrodiol (CI-dihydrodiol), respectively. This Escherichia coli O7:K1 (strain IAI39 / ExPEC) protein is 3-phenylpropionate/cinnamic acid dioxygenase subunit beta.